Here is a 547-residue protein sequence, read N- to C-terminus: Methyl-accepting chemotaxis citrate transducer (547 aa).

The Cytoplasmic portion of the chain corresponds to 1-5 (MKNIK). The helical transmembrane segment at 6–29 (VITGVIATLGIFSALLLVTGILFY) threads the bilayer. Topologically, residues 30-189 (SAVSSDRLNF…ASDQNQSSFT (160 aa)) are periplasmic. Residues 190-213 (QMQWTLGIILLIVLIVLAFIWLGL) traverse the membrane as a helical segment. The Cytoplasmic segment spans residues 214-547 (QRVLLRPLQR…AAEQANWESF (334 aa)). An HAMP domain is found at 215-267 (RVLLRPLQRIMAHIQTIADGDLTHEIEAEGRSEMGQLAAGLKTMQQSLIRTVS). The 230-residue stretch at 272 to 501 (NADSIYTGAG…ESAAAAAALE (230 aa)) folds into the Methyl-accepting transducer domain. At glutamine 296 the chain carries Glutamate methyl ester (Gln). Position 303 is a glutamate methyl ester (Glu) (glutamate 303). Glutamine 310 carries the glutamate methyl ester (Gln) modification. Residues 317–336 (QNTDNARQATGLAKTASETA) form a disordered region. Residues glutamate 492 and glutamate 501 each carry the glutamate methyl ester (Glu) modification. Residues 518–547 (KQPRREASPTTLSKGLTPQPAAEQANWESF) are disordered.

This sequence belongs to the methyl-accepting chemotaxis (MCP) protein family. Post-translationally, methylation level is increased by citrate and decreased by phenol.

The protein localises to the cell inner membrane. Its function is as follows. Acts as a receptor for citrate and mediates taxis away from phenol. Also mediates an attractant response to metal-citrate complexes. This chain is Methyl-accepting chemotaxis citrate transducer (tcp), found in Salmonella typhimurium (strain LT2 / SGSC1412 / ATCC 700720).